The primary structure comprises 160 residues: Na(+)/H(+) antiporter subunit E1 (160 aa).

4 helical membrane-spanning segments follow: residues 1-21 (MAIQ…VTGS), 27-47 (FILG…VLPG), 49-69 (FYLI…IELI), and 101-121 (WQIV…VLGI).

This sequence belongs to the CPA3 antiporters (TC 2.A.63) subunit E family. As to quaternary structure, may form a heterooligomeric complex that consists of seven subunits: mnhA1, mnhB1, mnhC1, mnhD1, mnhE1, mnhF1 and mnhG1.

It localises to the cell membrane. Its function is as follows. Mnh complex is a Na(+)/H(+) antiporter involved in Na(+) excretion. In Staphylococcus saprophyticus subsp. saprophyticus (strain ATCC 15305 / DSM 20229 / NCIMB 8711 / NCTC 7292 / S-41), this protein is Na(+)/H(+) antiporter subunit E1 (mnhE1).